The chain runs to 1677 residues: Pentafunctional AROM polypeptide (1677 aa).

The interval 1–394 (MAVADDTKAD…YEQKASIVED (394 aa)) is 3-dehydroquinate synthase. NAD(+)-binding positions include 50 to 52 (DDN), 89 to 92 (ETSK), 120 to 122 (GGV), and Asp-125. Residue Arg-136 coordinates 7-phospho-2-dehydro-3-deoxy-D-arabino-heptonate. Residue 145–146 (TT) participates in NAD(+) binding. Asp-152 and Lys-158 together coordinate 7-phospho-2-dehydro-3-deoxy-D-arabino-heptonate. Lys-167 is an NAD(+) binding site. Asn-168 contacts 7-phospho-2-dehydro-3-deoxy-D-arabino-heptonate. NAD(+) is bound by residues 185–188 (YLET) and Asn-196. Zn(2+) is bound at residue Glu-200. 7-phospho-2-dehydro-3-deoxy-D-arabino-heptonate is bound by residues 200 to 203 (EVVK) and Lys-260. The active-site Proton acceptor; for 3-dehydroquinate synthase activity is Glu-270. 7-phospho-2-dehydro-3-deoxy-D-arabino-heptonate contacts are provided by residues 274–278 (RNLVN) and His-281. His-281 is a binding site for Zn(2+). The Proton acceptor; for 3-dehydroquinate synthase activity role is filled by His-285. 7-phospho-2-dehydro-3-deoxy-D-arabino-heptonate-binding residues include His-297 and Lys-366. His-297 is a Zn(2+) binding site. The EPSP synthase stretch occupies residues 407 to 858 (VVPSIPTGNV…WDDLENKIGI (452 aa)). Residue Cys-840 is the For EPSP synthase activity of the active site. The interval 885-1113 (NSSILLIGMR…GQQRRTYFLC (229 aa)) is shikimate kinase. Residue 892–899 (GMRGTGKT) participates in ATP binding. The segment at 1114 to 1341 (LTYPDVRHAF…AAPGQLSFKQ (228 aa)) is 3-dehydroquinase. The Proton acceptor; for 3-dehydroquinate dehydratase activity role is filled by His-1243. Lys-1271 serves as the catalytic Schiff-base intermediate with substrate; for 3-dehydroquinate dehydratase activity. The segment at 1354–1677 (SKHFHLFGTP…TRVWEKYGEV (324 aa)) is shikimate dehydrogenase.

In the N-terminal section; belongs to the sugar phosphate cyclases superfamily. Dehydroquinate synthase family. It in the 2nd section; belongs to the EPSP synthase family. This sequence in the 3rd section; belongs to the shikimate kinase family. The protein in the 4th section; belongs to the type-I 3-dehydroquinase family. In the C-terminal section; belongs to the shikimate dehydrogenase family. As to quaternary structure, homodimer. The cofactor is Zn(2+).

It is found in the cytoplasm. The enzyme catalyses 7-phospho-2-dehydro-3-deoxy-D-arabino-heptonate = 3-dehydroquinate + phosphate. It catalyses the reaction 3-dehydroquinate = 3-dehydroshikimate + H2O. The catalysed reaction is shikimate + NADP(+) = 3-dehydroshikimate + NADPH + H(+). It carries out the reaction shikimate + ATP = 3-phosphoshikimate + ADP + H(+). The enzyme catalyses 3-phosphoshikimate + phosphoenolpyruvate = 5-O-(1-carboxyvinyl)-3-phosphoshikimate + phosphate. Its pathway is metabolic intermediate biosynthesis; chorismate biosynthesis; chorismate from D-erythrose 4-phosphate and phosphoenolpyruvate: step 2/7. The protein operates within metabolic intermediate biosynthesis; chorismate biosynthesis; chorismate from D-erythrose 4-phosphate and phosphoenolpyruvate: step 3/7. It participates in metabolic intermediate biosynthesis; chorismate biosynthesis; chorismate from D-erythrose 4-phosphate and phosphoenolpyruvate: step 4/7. It functions in the pathway metabolic intermediate biosynthesis; chorismate biosynthesis; chorismate from D-erythrose 4-phosphate and phosphoenolpyruvate: step 5/7. Its pathway is metabolic intermediate biosynthesis; chorismate biosynthesis; chorismate from D-erythrose 4-phosphate and phosphoenolpyruvate: step 6/7. Its function is as follows. The AROM polypeptide catalyzes 5 consecutive enzymatic reactions in prechorismate polyaromatic amino acid biosynthesis. The polypeptide is Pentafunctional AROM polypeptide (Coprinopsis cinerea (strain Okayama-7 / 130 / ATCC MYA-4618 / FGSC 9003) (Inky cap fungus)).